The chain runs to 505 residues: ATP synthase subunit alpha (505 aa).

169–176 contacts ATP; it reads GDRQTGKT.

It belongs to the ATPase alpha/beta chains family. F-type ATPases have 2 components, CF(1) - the catalytic core - and CF(0) - the membrane proton channel. CF(1) has five subunits: alpha(3), beta(3), gamma(1), delta(1), epsilon(1). CF(0) has three main subunits: a(1), b(2) and c(9-12). The alpha and beta chains form an alternating ring which encloses part of the gamma chain. CF(1) is attached to CF(0) by a central stalk formed by the gamma and epsilon chains, while a peripheral stalk is formed by the delta and b chains.

The protein localises to the cell membrane. The enzyme catalyses ATP + H2O + 4 H(+)(in) = ADP + phosphate + 5 H(+)(out). Its function is as follows. Produces ATP from ADP in the presence of a proton gradient across the membrane. The alpha chain is a regulatory subunit. This is ATP synthase subunit alpha from Alkaliphilus metalliredigens (strain QYMF).